Reading from the N-terminus, the 315-residue chain is Aspartate carbamoyltransferase catalytic subunit (315 aa).

Positions 64 and 65 each coordinate carbamoyl phosphate. K92 contributes to the L-aspartate binding site. Carbamoyl phosphate contacts are provided by R114, H142, and Q145. Residues R175 and R229 each contribute to the L-aspartate site. 2 residues coordinate carbamoyl phosphate: G270 and P271.

Belongs to the aspartate/ornithine carbamoyltransferase superfamily. ATCase family. Heterododecamer (2C3:3R2) of six catalytic PyrB chains organized as two trimers (C3), and six regulatory PyrI chains organized as three dimers (R2).

The enzyme catalyses carbamoyl phosphate + L-aspartate = N-carbamoyl-L-aspartate + phosphate + H(+). It functions in the pathway pyrimidine metabolism; UMP biosynthesis via de novo pathway; (S)-dihydroorotate from bicarbonate: step 2/3. In terms of biological role, catalyzes the condensation of carbamoyl phosphate and aspartate to form carbamoyl aspartate and inorganic phosphate, the committed step in the de novo pyrimidine nucleotide biosynthesis pathway. In Methylorubrum extorquens (strain CM4 / NCIMB 13688) (Methylobacterium extorquens), this protein is Aspartate carbamoyltransferase catalytic subunit.